The following is a 312-amino-acid chain: GDP-L-fucose synthase (312 aa).

Position 11 to 17 (11 to 17 (GGRGMVG)) interacts with NADP(+). The active-site Proton donor/acceptor is the Tyr-136. NADP(+)-binding residues include Lys-140 and His-179. Substrate is bound by residues Lys-187, Trp-202, and Arg-209.

This sequence belongs to the NAD(P)-dependent epimerase/dehydratase family. Fucose synthase subfamily.

The enzyme catalyses GDP-beta-L-fucose + NADP(+) = GDP-4-dehydro-alpha-D-rhamnose + NADPH + H(+). The protein operates within nucleotide-sugar biosynthesis; GDP-L-fucose biosynthesis via de novo pathway; GDP-L-fucose from GDP-alpha-D-mannose: step 2/2. Its function is as follows. Catalyzes the two-step NADP-dependent conversion of GDP-4-dehydro-6-deoxy-D-mannose to GDP-fucose, involving an epimerase and a reductase reaction. This chain is GDP-L-fucose synthase, found in Azorhizobium caulinodans (strain ATCC 43989 / DSM 5975 / JCM 20966 / LMG 6465 / NBRC 14845 / NCIMB 13405 / ORS 571).